A 369-amino-acid chain; its full sequence is 3-isopropylmalate dehydrogenase (369 aa).

77 to 90 contributes to the NAD(+) binding site; it reads GPKYDVLDFSVKPE. Residues arginine 97, arginine 107, arginine 135, and aspartate 226 each contribute to the substrate site. Mg(2+) contacts are provided by aspartate 226, aspartate 250, and aspartate 254. 289-301 contributes to the NAD(+) binding site; it reads GSAPDIAGQGKAN.

It belongs to the isocitrate and isopropylmalate dehydrogenases family. LeuB type 1 subfamily. Homodimer. It depends on Mg(2+) as a cofactor. Mn(2+) serves as cofactor.

The protein resides in the cytoplasm. The enzyme catalyses (2R,3S)-3-isopropylmalate + NAD(+) = 4-methyl-2-oxopentanoate + CO2 + NADH. It functions in the pathway amino-acid biosynthesis; L-leucine biosynthesis; L-leucine from 3-methyl-2-oxobutanoate: step 3/4. Catalyzes the oxidation of 3-carboxy-2-hydroxy-4-methylpentanoate (3-isopropylmalate) to 3-carboxy-4-methyl-2-oxopentanoate. The product decarboxylates to 4-methyl-2 oxopentanoate. In Cereibacter sphaeroides (strain ATCC 17023 / DSM 158 / JCM 6121 / CCUG 31486 / LMG 2827 / NBRC 12203 / NCIMB 8253 / ATH 2.4.1.) (Rhodobacter sphaeroides), this protein is 3-isopropylmalate dehydrogenase.